A 253-amino-acid chain; its full sequence is 3-deoxy-manno-octulosonate cytidylyltransferase (253 aa).

This sequence belongs to the KdsB family.

Its subcellular location is the cytoplasm. It carries out the reaction 3-deoxy-alpha-D-manno-oct-2-ulosonate + CTP = CMP-3-deoxy-beta-D-manno-octulosonate + diphosphate. It functions in the pathway nucleotide-sugar biosynthesis; CMP-3-deoxy-D-manno-octulosonate biosynthesis; CMP-3-deoxy-D-manno-octulosonate from 3-deoxy-D-manno-octulosonate and CTP: step 1/1. The protein operates within bacterial outer membrane biogenesis; lipopolysaccharide biosynthesis. Its function is as follows. Activates KDO (a required 8-carbon sugar) for incorporation into bacterial lipopolysaccharide in Gram-negative bacteria. This chain is 3-deoxy-manno-octulosonate cytidylyltransferase, found in Proteus mirabilis (strain HI4320).